A 285-amino-acid chain; its full sequence is MIRKLTLTAATALALSGGAAMAAGGGHVEDVPFSFEGPFGTFDQHQLQRGLQVYTEVCAACHGMKFVPIRSLSEPGGPELPEDQVRAYATQFTVTDEETGEDREGKPTDHFPHSALENAADLSLMAKARAGFHGPMGTGISQLFNGIGGPEYIYSVLTGFPEEPPKCAEGHEPDGFYYNRAFQNGSVPDTCKDANGVKTTAGSWIAMPPPLMDDLVEYADGHDASVHAMAEDVSAFLMWAAEPKLMARKQAGFTAVMFLTVLSVLLYLTNKRLWAGVKGKKKTNV.

The signal sequence occupies residues 1–22 (MIRKLTLTAATALALSGGAAMA). Residues Cys58, Cys61, His62, and Met207 each coordinate heme c. Residues 251–269 (AGFTAVMFLTVLSVLLYLT) form a helical membrane-spanning segment.

The main subunits of complex b-c1 are: cytochrome b, cytochrome c1 and the Rieske protein. Post-translationally, binds 1 heme c group covalently per subunit.

Its subcellular location is the cell membrane. In terms of biological role, component of the ubiquinol-cytochrome c reductase complex (complex III or cytochrome b-c1 complex), which is a respiratory chain that generates an electrochemical potential coupled to ATP synthesis. c1 functions as an electron donor to cytochrome c. The polypeptide is Cytochrome c1 (petC) (Cereibacter sphaeroides (Rhodobacter sphaeroides)).